The sequence spans 344 residues: Phosphoribosylformylglycinamidine cyclo-ligase (344 aa).

This sequence belongs to the AIR synthase family.

It is found in the cytoplasm. The catalysed reaction is 2-formamido-N(1)-(5-O-phospho-beta-D-ribosyl)acetamidine + ATP = 5-amino-1-(5-phospho-beta-D-ribosyl)imidazole + ADP + phosphate + H(+). It participates in purine metabolism; IMP biosynthesis via de novo pathway; 5-amino-1-(5-phospho-D-ribosyl)imidazole from N(2)-formyl-N(1)-(5-phospho-D-ribosyl)glycinamide: step 2/2. The protein is Phosphoribosylformylglycinamidine cyclo-ligase of Neisseria meningitidis serogroup C / serotype 2a (strain ATCC 700532 / DSM 15464 / FAM18).